Consider the following 463-residue polypeptide: Probable transport protein HsrA (463 aa).

The next 14 helical transmembrane spans lie at 10-30, 49-69, 82-102, 107-127, 139-159, 165-185, 197-217, 225-245, 267-287, 298-318, 328-348, 354-374, 393-413, and 429-449; these read GLAW…TILN, MAII…AWAA, VFTF…ESLI, IQGI…IQAV, MATA…WLVI, WIFL…GSVM, WTGF…LDLL, SVTY…CGYA, IIAN…LPLM, MSGW…ILIG, TTLI…AWLD, TWII…FTSI, VLSI…SIIL, and AFSY…WSLM.

Belongs to the major facilitator superfamily. EmrB family.

Its subcellular location is the cell inner membrane. The sequence is that of Probable transport protein HsrA (hsrA) from Haemophilus influenzae (strain ATCC 51907 / DSM 11121 / KW20 / Rd).